Here is a 548-residue protein sequence, read N- to C-terminus: 4-coumarate--CoA ligase CCL1 (548 aa).

Residues 195–203 (SSGTTGLPK), 337–342 (QGYGMT), aspartate 426, 438–441 (IVDR), and lysine 532 each bind ATP. The segment at 268–337 (EISKLLELIE…EKLPHAKLGQ (70 aa)) is SBD1. The interval 338 to 405 (GYGMTEAGPV…IRGKQIMKGY (68 aa)) is SBD2.

It belongs to the ATP-dependent AMP-binding enzyme family. Mostly expressed in glandular trichomes (lupulin glands) after flowering, and, to a lower extent, in stems, leaves, cones and flowers.

It is found in the cytoplasm. It catalyses the reaction (E)-4-coumarate + ATP + CoA = (E)-4-coumaroyl-CoA + AMP + diphosphate. Its pathway is secondary metabolite biosynthesis. Involved in the biosynthesis of prenylated phenolics natural products which contribute to the bitter taste of beer and display broad biological activities. Catalyzes the ligation of CoA on (E)-4-coumarate to produce (E)-4-coumaroyl-CoA. The chain is 4-coumarate--CoA ligase CCL1 from Humulus lupulus (European hop).